Reading from the N-terminus, the 1940-residue chain is Myosin-3 (1940 aa).

Residues 33 to 82 enclose the Myosin N-terminal SH3-like domain; it reads DAKTYCFVVDSKEEYVKGKIKSSQDGKVTVETEDSRTLVVKPEDVYAMNP. In terms of domain architecture, Myosin motor spans 86–779; that stretch reads DKIEDMAMLT…LLGTLEEMRD (694 aa). K130 carries the N6,N6,N6-trimethyllysine modification. Residue 179-186 participates in ATP binding; that stretch reads GESGAGKT. 2 actin-binding regions span residues 656-678 and 758-772; these read LNKL…IPNE and KFGH…GLLG. One can recognise an IQ domain in the interval 782 to 811; it reads LAKLITRTQAVCRGFLMRVEFQKMMQRRES. A coiled-coil region spans residues 841–1928; sequence LKSAETEKEM…NKLRAKTRDF (1088 aa). The interval 1260–1289 is disordered; it reads ARGKNEEMQRSLSELTTQKSRLQTEAGELS. The segment covering 1269-1282 has biased composition (polar residues); sequence RSLSELTTQKSRLQ.

Belongs to the TRAFAC class myosin-kinesin ATPase superfamily. Myosin family. In terms of assembly, muscle myosin is a hexameric protein that consists of 2 heavy chain subunits (MHC), 2 alkali light chain subunits (MLC) and 2 regulatory light chain subunits (MLC-2).

The protein resides in the cytoplasm. The protein localises to the myofibril. In terms of biological role, muscle contraction. The sequence is that of Myosin-3 (Myh3) from Mus musculus (Mouse).